Reading from the N-terminus, the 1055-residue chain is TNF receptor-associated factor homolog 1a (1055 aa).

The tract at residues 1–56 is disordered; the sequence is MSESTNEDSGAGRSSLEENSNGQRSQSEEAIAEWRSSEQVENGTPSTSPPYWDIDD. Residues 37–46 show a composition bias toward polar residues; the sequence is SEQVENGTPS. One can recognise an MATH domain in the interval 68 to 191; sequence FGKNTWTIEK…SGCLTIKAQV (124 aa). 4 disordered regions span residues 352–380, 431–590, 603–772, and 820–845; these read PKKE…VERD, AESE…NGSY, FSNG…APII, and VGSS…SHPS. A compositionally biased stretch (basic and acidic residues) spans 433–446; sequence SEQKGKRGASEKEK. Residues 441–496 adopt a coiled-coil conformation; that stretch reads ASEKEKKSKKKQAKQKKNKNKGKEMRKEDKVRTQTEEREIEKEECVRAIAESSAEK. Positions 447 to 460 are enriched in basic residues; the sequence is KSKKKQAKQKKNKN. Residues 461–486 are compositionally biased toward basic and acidic residues; it reads KGKEMRKEDKVRTQTEEREIEKEECV. A compositionally biased stretch (low complexity) spans 502-513; that stretch reads DVSDVSDSVDSS. A compositionally biased stretch (basic and acidic residues) spans 524–537; the sequence is RESSPVHWEMDASE. Residues 569–586 show a composition bias toward polar residues; that stretch reads MDDSSSTCSNDSIQSGVA. A compositionally biased stretch (basic and acidic residues) spans 657 to 668; sequence QKPESPKERSPV. Composition is skewed to polar residues over residues 723–740 and 823–845; these read KSPS…QLQT and SGFT…SHPS.

In terms of assembly, interacts with AHK3. Interacts with ATG6, SINAT1, SINAT2, SINAT5 and SINAT6.

The protein localises to the cytoplasm. In terms of biological role, functions redundantly with TRAF1B in the regulation of plant immune response. Contributes to the turnover of the nucleotide-binding domain and leucine-rich repeat-containing (NB-LRR) immune receptors SNC1 and RPS2. May associate with an E3 ubiquitin-protein ligase complex, which modulates ubiquitination and subsequent degradation of NB-LRR immune sensors to maintain their homeostasis. Functions redundantly with TRAF1B in the regulation of autophagosome formation. Required for SINAT1- and SINAT2-mediated ubiquitination and destabilization of ATG6. Functions as a molecular adapter that helps to regulate autophagy by modulating ATG6 stability. This Arabidopsis thaliana (Mouse-ear cress) protein is TNF receptor-associated factor homolog 1a.